Reading from the N-terminus, the 387-residue chain is TSC22 domain family protein 4 (387 aa).

2 disordered regions span residues 1 to 85 (MSGG…GEPY) and 135 to 232 (ISTP…RRDG). Pro residues predominate over residues 28–51 (SDPPAPPAPAGPPPRLPNGEPNPD). T57 carries the post-translational modification Phosphothreonine. Phosphoserine occurs at positions 62 and 165. Position 183 is a phosphothreonine (T183). Residues S187 and S189 each carry the phosphoserine modification. Phosphothreonine is present on T223. Phosphoserine occurs at positions 254, 258, and 271. The leucine-zipper stretch occupies residues 336–357 (LKEQIRDLAERNAALEQENGLL). A Phosphoserine modification is found at S362. The tract at residues 368–387 (QLPSSGLPRLGPSAPNGPSI) is disordered.

It belongs to the TSC-22/Dip/Bun family. Forms a homodimer or heterodimer. Forms a heterodimer with TSC22D1 isoforms 1 and 2. Interacts with NRBP1.

The protein localises to the nucleus. The protein resides in the cytoplasm. It is found in the cell projection. It localises to the dendrite. Its subcellular location is the synapse. In terms of biological role, binds DNA and acts as a transcriptional repressor. Involved in the regulation of systematic glucose homeostasis and insulin sensitivity, via transcriptional repression of downstream insulin signaling targets such as OBP2A/LCN13. Acts as a negative regulator of lipogenic gene expression in hepatocytes and thereby mediates the control of very low-density lipoprotein release. May play a role in neurite elongation and survival. The polypeptide is TSC22 domain family protein 4 (Rattus norvegicus (Rat)).